The following is a 210-amino-acid chain: Mitochondrial cardiolipin hydrolase (210 aa).

Residues 1 to 5 are Mitochondrial intermembrane-facing; that stretch reads MLLWG. Residues 6–24 form a helical membrane-spanning segment; that stretch reads RWKLAAGLAGLALSLELFY. Residues 25-210 lie on the Cytoplasmic side of the membrane; the sequence is RYMRRRKPLR…YNFFPEKENK (186 aa). The PLD phosphodiesterase domain maps to 138-165; it reads SSGYMHHKFAVVDGTVVLTGSLNWTVQA. Residues H143, K145, and D150 contribute to the active site.

Belongs to the phospholipase D family. MitoPLD/Zucchini subfamily. As to quaternary structure, homodimer.

It localises to the mitochondrion outer membrane. It carries out the reaction a cardiolipin + H2O = a 1,2-diacyl-sn-glycero-3-phospho-(1'-sn-glycerol) + a 1,2-diacyl-sn-glycero-3-phosphate + H(+). Its function is as follows. Presents phospholipase and nuclease activities, depending on the different physiological conditions. Plays a key role in mitochondrial fusion and fission via its phospholipase activity. In its phospholipase role, it uses the mitochondrial lipid cardiolipin as substrate to generate phosphatidate (PA or 1,2-diacyl-sn-glycero-3-phosphate), a second messenger signaling lipid. Production of PA facilitates Mitofusin-mediated fusion, whereas the cleavage of PA by the Lipin family of phosphatases produces diacylgycerol (DAG) which promotes mitochondrial fission. Regulates mitochondrial shape through facilitating mitochondrial fusion. During spermatogenesis, plays a critical role in PIWI-interacting RNA (piRNA) biogenesis. piRNAs provide essential protection against the activity of mobile genetic elements. piRNA-mediated transposon silencing is thus critical for maintaining genome stability, in particular in germline cells when transposons are mobilized as a consequence of wide-spread genomic demethylation. Has been shown to be a backbone-non-specific, single strand-specific nuclease, cleaving either RNA or DNA substrates with similar affinity. Produces 5' phosphate and 3' hydroxyl termini, suggesting it could directly participate in the processing of primary piRNA transcripts. Has been proposed to act as a cardiolipin hydrolase to generate phosphatidic acid at mitochondrial surface. Although it cannot be excluded that it can act as a phospholipase in some circumstances, this activity could not be confirmed. This chain is Mitochondrial cardiolipin hydrolase (pld6), found in Xenopus laevis (African clawed frog).